Consider the following 191-residue polypeptide: Protein GrpE (191 aa).

Residues 1–14 are compositionally biased toward polar residues; the sequence is MEDQKQTPSNQTAT. The segment at 1-35 is disordered; it reads MEDQKQTPSNQTATPAGDEATSTAAASPETGAPDT. Low complexity predominate over residues 19-35; it reads EATSTAAASPETGAPDT.

The protein belongs to the GrpE family. Homodimer.

Its subcellular location is the cytoplasm. Participates actively in the response to hyperosmotic and heat shock by preventing the aggregation of stress-denatured proteins, in association with DnaK and GrpE. It is the nucleotide exchange factor for DnaK and may function as a thermosensor. Unfolded proteins bind initially to DnaJ; upon interaction with the DnaJ-bound protein, DnaK hydrolyzes its bound ATP, resulting in the formation of a stable complex. GrpE releases ADP from DnaK; ATP binding to DnaK triggers the release of the substrate protein, thus completing the reaction cycle. Several rounds of ATP-dependent interactions between DnaJ, DnaK and GrpE are required for fully efficient folding. The polypeptide is Protein GrpE (Cupriavidus taiwanensis (strain DSM 17343 / BCRC 17206 / CCUG 44338 / CIP 107171 / LMG 19424 / R1) (Ralstonia taiwanensis (strain LMG 19424))).